The chain runs to 418 residues: Tryptophan synthase beta chain (418 aa).

Over residues 1–18 (MTSTLPKASQPDPSSLQP) the composition is skewed to polar residues. A disordered region spans residues 1-28 (MTSTLPKASQPDPSSLQPSARPGAHGRF). An N6-(pyridoxal phosphate)lysine modification is found at Lys111.

Belongs to the TrpB family. Tetramer of two alpha and two beta chains. Requires pyridoxal 5'-phosphate as cofactor.

The catalysed reaction is (1S,2R)-1-C-(indol-3-yl)glycerol 3-phosphate + L-serine = D-glyceraldehyde 3-phosphate + L-tryptophan + H2O. It participates in amino-acid biosynthesis; L-tryptophan biosynthesis; L-tryptophan from chorismate: step 5/5. The beta subunit is responsible for the synthesis of L-tryptophan from indole and L-serine. This Synechococcus sp. (strain CC9902) protein is Tryptophan synthase beta chain.